A 62-amino-acid polypeptide reads, in one-letter code: Fungus-induced protein 1 (62 aa).

The signal sequence occupies residues 1–22 (MSQNLFQILLIFAILAALQVQG).

In Caenorhabditis briggsae, this protein is Fungus-induced protein 1.